A 437-amino-acid chain; its full sequence is Serine hydroxymethyltransferase 1 (437 aa).

Residues L132 and 136 to 138 contribute to the (6S)-5,6,7,8-tetrahydrofolate site; that span reads GHL. K241 is modified (N6-(pyridoxal phosphate)lysine).

Belongs to the SHMT family. Homodimer. It depends on pyridoxal 5'-phosphate as a cofactor.

It is found in the cytoplasm. It carries out the reaction (6R)-5,10-methylene-5,6,7,8-tetrahydrofolate + glycine + H2O = (6S)-5,6,7,8-tetrahydrofolate + L-serine. The protein operates within one-carbon metabolism; tetrahydrofolate interconversion. Its pathway is amino-acid biosynthesis; glycine biosynthesis; glycine from L-serine: step 1/1. Functionally, catalyzes the reversible interconversion of serine and glycine with tetrahydrofolate (THF) serving as the one-carbon carrier. This reaction serves as the major source of one-carbon groups required for the biosynthesis of purines, thymidylate, methionine, and other important biomolecules. Also exhibits THF-independent aldolase activity toward beta-hydroxyamino acids, producing glycine and aldehydes, via a retro-aldol mechanism. The sequence is that of Serine hydroxymethyltransferase 1 from Mesorhizobium japonicum (strain LMG 29417 / CECT 9101 / MAFF 303099) (Mesorhizobium loti (strain MAFF 303099)).